The following is a 545-amino-acid chain: MTTNYIFVTGGVVSSLGKGIAAASLAAILEARGLNVTIMKLDPYINVDPGTMSPIQHGEVFVTEDGAETDLDLGHYERFIRTKMSRRNNFTTGRIYSDVLRKERRGDYLGATVQVIPHITNAIKERVLEGGEGHDVVLVEIGGTVGDIESLPFLEAIRQLAVDIGREHALFMHLTLVPYLAAAGEVKTKPTQHSVKELLSIGIQPDILICRSDRAVPANERAKIALFCNVPEKAVISMKDVDSIYKIPGLLKSQGLDDYICKRFSLNCPEANLSEWEQVIYEEANPAGEVTIGMVGKYIELPDAYKSVIEALKHGGLKNRVTVNIKLIDSQDVETRGVEILKDLDAILIPGGFGYRGVEGKIATARYARENNIPYLGICLGMQVALIEFARNVAGMDNANSTEFVPDCKYPVVALITEWRDEDGNVEVRSEKSDLGGTMRLGAQQCQLSDDSLVRQLYGASTIVERHRHRYEVNNMLLKQIEAAGLRVAGRSGDDQLVEIIEVPNHPWFVACQFHPEFTSTPRDGHPLFAGFVKAASEHQKRQAK.

The tract at residues Met1 to Leu266 is amidoligase domain. Ser14 is a binding site for CTP. Ser14 contributes to the UTP binding site. ATP-binding positions include Ser15–Ile20 and Asp72. Asp72 and Glu140 together coordinate Mg(2+). Residues Asp147–Glu149, Lys187–Gln192, and Lys223 contribute to the CTP site. UTP-binding positions include Lys187 to Gln192 and Lys223. Residue Lys239–Val241 coordinates ATP. The Glutamine amidotransferase type-1 domain occupies Thr291 to Arg542. Gly352 is an L-glutamine binding site. The active-site Nucleophile; for glutamine hydrolysis is Cys379. Residues Leu380 to Gln383, Glu403, and Arg470 contribute to the L-glutamine site. Catalysis depends on residues His515 and Glu517.

The protein belongs to the CTP synthase family. Homotetramer.

The catalysed reaction is UTP + L-glutamine + ATP + H2O = CTP + L-glutamate + ADP + phosphate + 2 H(+). It catalyses the reaction L-glutamine + H2O = L-glutamate + NH4(+). It carries out the reaction UTP + NH4(+) + ATP = CTP + ADP + phosphate + 2 H(+). Its pathway is pyrimidine metabolism; CTP biosynthesis via de novo pathway; CTP from UDP: step 2/2. Allosterically activated by GTP, when glutamine is the substrate; GTP has no effect on the reaction when ammonia is the substrate. The allosteric effector GTP functions by stabilizing the protein conformation that binds the tetrahedral intermediate(s) formed during glutamine hydrolysis. Inhibited by the product CTP, via allosteric rather than competitive inhibition. Its function is as follows. Catalyzes the ATP-dependent amination of UTP to CTP with either L-glutamine or ammonia as the source of nitrogen. Regulates intracellular CTP levels through interactions with the four ribonucleotide triphosphates. This is CTP synthase from Salmonella schwarzengrund (strain CVM19633).